A 383-amino-acid polypeptide reads, in one-letter code: MSKQDYYELLGVEKGASPDDIKKAYRKQAMQFHPDRNPGNADAEQKFKEINEAYDVLKDEQKRAAYDRFGHAAFEQGGPGGGGGGGFGGFGGGGFSDIFDEMFGEFMGGGGRRGQSTGRGADLRYNMDISLEDAFAGKTATVKVPSSAPCEDCKGTGGKDGAQPVTCSACHGHGKVRQQQGFFTIERTCPTCQGMGKIIKDPCRSCGGSGRTRKEKTLQVNIPAGVEDGTRIRLAGEGEAGMRGAPAGDLYIFLSIAAHRIFQRDGANIFCRVPIPMTTAALGGTIEVPTIDGSKAKVTIPEGTQTGNQFRLRSKGMSVLRSPARGDMFIQAVVETPVNLTKRQKELLNEFNEAGEGEKAKNSPESQGFFAKVKELWEDLKEG.

A J domain is found at 5–70 (DYYELLGVEK…QKRAAYDRFG (66 aa)). The CR-type zinc-finger motif lies at 137-215 (GKTATVKVPS…CGGSGRTRKE (79 aa)). Positions 150, 153, 167, 170, 189, 192, 203, and 206 each coordinate Zn(2+). CXXCXGXG motif repeat units follow at residues 150–157 (CEDCKGTG), 167–174 (CSACHGHG), 189–196 (CPTCQGMG), and 203–210 (CRSCGGSG).

Belongs to the DnaJ family. In terms of assembly, homodimer. Zn(2+) is required as a cofactor.

The protein resides in the cytoplasm. Participates actively in the response to hyperosmotic and heat shock by preventing the aggregation of stress-denatured proteins and by disaggregating proteins, also in an autonomous, DnaK-independent fashion. Unfolded proteins bind initially to DnaJ; upon interaction with the DnaJ-bound protein, DnaK hydrolyzes its bound ATP, resulting in the formation of a stable complex. GrpE releases ADP from DnaK; ATP binding to DnaK triggers the release of the substrate protein, thus completing the reaction cycle. Several rounds of ATP-dependent interactions between DnaJ, DnaK and GrpE are required for fully efficient folding. Also involved, together with DnaK and GrpE, in the DNA replication of plasmids through activation of initiation proteins. The sequence is that of Chaperone protein DnaJ from Paramagnetospirillum magneticum (strain ATCC 700264 / AMB-1) (Magnetospirillum magneticum).